Consider the following 281-residue polypeptide: 3-hydroxyanthranilate 3,4-dioxygenase (281 aa).

Residues 1 to 162 (MAGVTAIEIP…SNEFKTGKPG (162 aa)) are domain A (catalytic). An O2-binding site is contributed by R45. 3 residues coordinate Fe cation: H49, E55, and H93. E55 lines the substrate pocket. Residues R97 and E107 each contribute to the substrate site. A linker region spans residues 163–179 (KGTFACNAPYEARWTDL). Residues 180–281 (PVPINRKEFI…GFAITIRMPG (102 aa)) form a domain B region.

The protein belongs to the 3-HAO family. Fe(2+) serves as cofactor.

It is found in the cytoplasm. It carries out the reaction 3-hydroxyanthranilate + O2 = (2Z,4Z)-2-amino-3-carboxymuconate 6-semialdehyde. Its pathway is cofactor biosynthesis; NAD(+) biosynthesis; quinolinate from L-kynurenine: step 3/3. Functionally, catalyzes the oxidative ring opening of 3-hydroxyanthranilate to 2-amino-3-carboxymuconate semialdehyde, which spontaneously cyclizes to quinolinate. This Caenorhabditis briggsae protein is 3-hydroxyanthranilate 3,4-dioxygenase (haao-1).